The following is a 141-amino-acid chain: Hemoglobin subunit alpha-1 (141 aa).

Residues 1–141 form the Globin domain; sequence VLSAADKGNV…VSTVLTSKYR (141 aa). Residue H58 coordinates O2. Heme b is bound at residue H87.

Belongs to the globin family. In terms of assembly, heterotetramer of two alpha chains and two beta chains. As to expression, red blood cells.

Functionally, involved in oxygen transport from the lung to the various peripheral tissues. This chain is Hemoglobin subunit alpha-1, found in Bos mutus grunniens (Wild yak).